Reading from the N-terminus, the 267-residue chain is Tetrahydromethanopterin S-methyltransferase subunit C (267 aa).

8 helical membrane passes run 18–38 (LMALGILGGLAGIYASAVNPV), 39–59 (IGPVLASLGAVCAIVWGADAI), 76–96 (YMSVSIGIVGVVAGLASVFVV), 99–119 (IAVPVVALILAMILGVVVAVL), 138–158 (ISGAAALSVLGFSAAIAGSYT), 163–183 (LTSVITTGFIGLLFILNTMAI), 209–229 (FISMAIVGLLGIGLNPSWWLV), and 230–250 (SLIGALCWIVAFRAFVSASFE).

This sequence belongs to the MtrC family. In terms of assembly, the complex is composed of 8 subunits; MtrA, MtrB, MtrC, MtrD, MtrE, MtrF, MtrG and MtrH.

It is found in the cell membrane. The catalysed reaction is 5-methyl-5,6,7,8-tetrahydromethanopterin + coenzyme M + 2 Na(+)(in) = 5,6,7,8-tetrahydromethanopterin + methyl-coenzyme M + 2 Na(+)(out). It participates in one-carbon metabolism; methanogenesis from CO(2); methyl-coenzyme M from 5,10-methylene-5,6,7,8-tetrahydromethanopterin: step 2/2. Functionally, part of a complex that catalyzes the formation of methyl-coenzyme M and tetrahydromethanopterin from coenzyme M and methyl-tetrahydromethanopterin. This is an energy-conserving, sodium-ion translocating step. The polypeptide is Tetrahydromethanopterin S-methyltransferase subunit C (Methanothermobacter marburgensis (strain ATCC BAA-927 / DSM 2133 / JCM 14651 / NBRC 100331 / OCM 82 / Marburg) (Methanobacterium thermoautotrophicum)).